Consider the following 123-residue polypeptide: Ribonuclease P protein component (123 aa).

The protein belongs to the RnpA family. Consists of a catalytic RNA component (M1 or rnpB) and a protein subunit.

It carries out the reaction Endonucleolytic cleavage of RNA, removing 5'-extranucleotides from tRNA precursor.. Its function is as follows. RNaseP catalyzes the removal of the 5'-leader sequence from pre-tRNA to produce the mature 5'-terminus. It can also cleave other RNA substrates such as 4.5S RNA. The protein component plays an auxiliary but essential role in vivo by binding to the 5'-leader sequence and broadening the substrate specificity of the ribozyme. This Streptomyces avermitilis (strain ATCC 31267 / DSM 46492 / JCM 5070 / NBRC 14893 / NCIMB 12804 / NRRL 8165 / MA-4680) protein is Ribonuclease P protein component.